Consider the following 424-residue polypeptide: Glutamyl-tRNA reductase (424 aa).

Residues 49–52 (TCNR), serine 105, 110–112 (EPQ), and glutamine 116 contribute to the substrate site. Catalysis depends on cysteine 50, which acts as the Nucleophile. 185-190 (GSGETA) lines the NADP(+) pocket.

It belongs to the glutamyl-tRNA reductase family. Homodimer.

The catalysed reaction is (S)-4-amino-5-oxopentanoate + tRNA(Glu) + NADP(+) = L-glutamyl-tRNA(Glu) + NADPH + H(+). The protein operates within porphyrin-containing compound metabolism; protoporphyrin-IX biosynthesis; 5-aminolevulinate from L-glutamyl-tRNA(Glu): step 1/2. Functionally, catalyzes the NADPH-dependent reduction of glutamyl-tRNA(Glu) to glutamate 1-semialdehyde (GSA). This is Glutamyl-tRNA reductase from Legionella pneumophila (strain Corby).